The following is a 145-amino-acid chain: Large-conductance mechanosensitive channel (145 aa).

A run of 3 helical transmembrane segments spans residues Val14 to Leu34, Leu38 to Pro58, and Gly81 to Val101.

This sequence belongs to the MscL family. As to quaternary structure, homopentamer.

Its subcellular location is the cell inner membrane. Channel that opens in response to stretch forces in the membrane lipid bilayer. May participate in the regulation of osmotic pressure changes within the cell. The sequence is that of Large-conductance mechanosensitive channel from Rhizobium johnstonii (strain DSM 114642 / LMG 32736 / 3841) (Rhizobium leguminosarum bv. viciae).